The chain runs to 514 residues: Adenylosuccinate synthetase 2, chloroplastic (514 aa).

The transit peptide at 1 to 56 (MAMAAAAAVASQGLLATSSQQQKKSSAKLICNAATFFSGKRLLWVKSCNNGAVGLR) directs the protein to the chloroplast. Residues 100 to 106 (GDEGKGK) and 128 to 130 (GHT) contribute to the GTP site. The active-site Proton acceptor is Asp101. Positions 101 and 128 each coordinate Mg(2+). Residues 101-104 (DEGK), 126-129 (NAGH), Thr218, Arg232, Gln312, Thr327, and Arg391 each bind IMP. The active-site Proton donor is His129. 387–393 (TTTGRPR) provides a ligand contact to substrate. GTP is bound by residues Arg393, 419 to 421 (KLD), and 502 to 504 (GVG).

It belongs to the adenylosuccinate synthetase family. Homodimer. Mg(2+) is required as a cofactor.

The protein resides in the plastid. It is found in the chloroplast. The enzyme catalyses IMP + L-aspartate + GTP = N(6)-(1,2-dicarboxyethyl)-AMP + GDP + phosphate + 2 H(+). The protein operates within purine metabolism; AMP biosynthesis via de novo pathway; AMP from IMP: step 1/2. Plays an important role in the de novo pathway and in the salvage pathway of purine nucleotide biosynthesis. Catalyzes the first committed step in the biosynthesis of AMP from IMP. This Physcomitrium patens (Spreading-leaved earth moss) protein is Adenylosuccinate synthetase 2, chloroplastic.